The following is a 125-amino-acid chain: MVTINQLVRKSRSNKIIKTNVPALSSCPQKRGVCIRVYTTTPKKPNSALRKVCRVRLTNGFEVTSYIGGEGHNLQEHSSVLIRGGRVKDLPGVRYHIVRGALDCAGVKNRKKARSKYGVKKIKNK.

Aspartate 89 carries the 3-methylthioaspartic acid modification.

Belongs to the universal ribosomal protein uS12 family. In terms of assembly, part of the 30S ribosomal subunit. Contacts proteins S8 and S17. May interact with IF1 in the 30S initiation complex.

Functionally, with S4 and S5 plays an important role in translational accuracy. In terms of biological role, interacts with and stabilizes bases of the 16S rRNA that are involved in tRNA selection in the A site and with the mRNA backbone. Located at the interface of the 30S and 50S subunits, it traverses the body of the 30S subunit contacting proteins on the other side and probably holding the rRNA structure together. The combined cluster of proteins S8, S12 and S17 appears to hold together the shoulder and platform of the 30S subunit. The sequence is that of Small ribosomal subunit protein uS12 from Wigglesworthia glossinidia brevipalpis.